The chain runs to 469 residues: ATP synthase subunit beta (469 aa).

Residue 153–160 (GGAGVGKT) participates in ATP binding.

Belongs to the ATPase alpha/beta chains family. F-type ATPases have 2 components, CF(1) - the catalytic core - and CF(0) - the membrane proton channel. CF(1) has five subunits: alpha(3), beta(3), gamma(1), delta(1), epsilon(1). CF(0) has three main subunits: a(1), b(2) and c(9-12). The alpha and beta chains form an alternating ring which encloses part of the gamma chain. CF(1) is attached to CF(0) by a central stalk formed by the gamma and epsilon chains, while a peripheral stalk is formed by the delta and b chains.

The protein localises to the cell inner membrane. It carries out the reaction ATP + H2O + 4 H(+)(in) = ADP + phosphate + 5 H(+)(out). In terms of biological role, produces ATP from ADP in the presence of a proton gradient across the membrane. The catalytic sites are hosted primarily by the beta subunits. This chain is ATP synthase subunit beta, found in Pseudothermotoga lettingae (strain ATCC BAA-301 / DSM 14385 / NBRC 107922 / TMO) (Thermotoga lettingae).